The sequence spans 461 residues: Cysteine--tRNA ligase (461 aa).

Cysteine 30 is a binding site for Zn(2+). The short motif at 32–42 (VTIYDLCHIGH) is the 'HIGH' region element. Cysteine 211, histidine 236, and glutamate 240 together coordinate Zn(2+). The 'KMSKS' region signature appears at 268–272 (KMSKS). Lysine 271 contributes to the ATP binding site.

Belongs to the class-I aminoacyl-tRNA synthetase family. As to quaternary structure, monomer. The cofactor is Zn(2+).

Its subcellular location is the cytoplasm. The enzyme catalyses tRNA(Cys) + L-cysteine + ATP = L-cysteinyl-tRNA(Cys) + AMP + diphosphate. In Shewanella putrefaciens (strain CN-32 / ATCC BAA-453), this protein is Cysteine--tRNA ligase.